Consider the following 283-residue polypeptide: Pantothenate synthetase (283 aa).

Position 30-37 (30-37 (MGYLHEGH)) interacts with ATP. The Proton donor role is filled by H37. Q61 contributes to the (R)-pantoate binding site. Residue Q61 coordinates beta-alanine. An ATP-binding site is contributed by 147-150 (GQKD). Q153 is a binding site for (R)-pantoate. Residues V176 and 184–187 (MSSR) contribute to the ATP site.

This sequence belongs to the pantothenate synthetase family. In terms of assembly, homodimer.

It localises to the cytoplasm. The catalysed reaction is (R)-pantoate + beta-alanine + ATP = (R)-pantothenate + AMP + diphosphate + H(+). Its pathway is cofactor biosynthesis; (R)-pantothenate biosynthesis; (R)-pantothenate from (R)-pantoate and beta-alanine: step 1/1. In terms of biological role, catalyzes the condensation of pantoate with beta-alanine in an ATP-dependent reaction via a pantoyl-adenylate intermediate. The polypeptide is Pantothenate synthetase (Thermoanaerobacter sp. (strain X514)).